Here is a 534-residue protein sequence, read N- to C-terminus: Peptide chain release factor 3 (534 aa).

The region spanning 9–278 (ARRRTFAIIS…FFVEHAPPPQ (270 aa)) is the tr-type G domain. GTP-binding positions include 18–25 (SHPDAGKT), 86–90 (DTPGH), and 140–143 (NKLD).

It belongs to the TRAFAC class translation factor GTPase superfamily. Classic translation factor GTPase family. PrfC subfamily.

The protein resides in the cytoplasm. In terms of biological role, increases the formation of ribosomal termination complexes and stimulates activities of RF-1 and RF-2. It binds guanine nucleotides and has strong preference for UGA stop codons. It may interact directly with the ribosome. The stimulation of RF-1 and RF-2 is significantly reduced by GTP and GDP, but not by GMP. This Xanthomonas euvesicatoria pv. vesicatoria (strain 85-10) (Xanthomonas campestris pv. vesicatoria) protein is Peptide chain release factor 3.